A 436-amino-acid chain; its full sequence is MTKPVVAIVGRPNVGKSTIFNRIVGERVSIVEDTPGVTRDRIYSSGEWLTHDFNVIDTGGIELTDAPFQTQIRAQAEIAIDEADVIIFMVNQREGLTQTDEMIAQMLYKTNKPVVLAVNKVDNPEMRTDIYDFYALGFGEPFPISGSHGLGLGDLLDEVANNFKDEEDDDYDEDTIKLSLIGRPNVGKSSLVNAILGEDRVIVSNIAGTTRDAIDTEYSYEDQDYVLIDTAGMRKKGKVYESTEKYSVLRALKAIERSNVVLVVLDAEEGIIEQDKRVAGYAHEEGKAVVIVVNKWDTLDKDSKTMKKFEDKIRQEFQFLDYAPIAFVSAKEKQRLRTLFPLIKEASENHKKRVQSSTLNEVITDAISMNPTPTDKGRRLKVFYATQVAVEPPTFVVFVNDAELMHFSYKRYLENQIRDAFGFEGTPIRIIPRKRN.

EngA-type G domains lie at 4 to 167 and 176 to 351; these read PVVA…KDEE and IKLS…ENHK. GTP contacts are provided by residues 10–17, 57–61, 119–122, 182–189, 229–233, and 294–297; these read GRPNVGKS, DTGGI, NKVD, DTAGM, and NKWD. Positions 352 to 436 constitute a KH-like domain; sequence KRVQSSTLNE…PIRIIPRKRN (85 aa).

This sequence belongs to the TRAFAC class TrmE-Era-EngA-EngB-Septin-like GTPase superfamily. EngA (Der) GTPase family. In terms of assembly, associates with the 50S ribosomal subunit.

Its function is as follows. GTPase that plays an essential role in the late steps of ribosome biogenesis. The chain is GTPase Der from Staphylococcus carnosus (strain TM300).